The following is a 257-amino-acid chain: MSRPLITRSPASPLNNQGIPTPAQLTKSNAPVHIDVGGHMYTSSLATLTKYPESRIGRLFDGTEPIVLDSLKQHYFIDRDGQMFRYILNFLRTSKLLIPDDFKDYTLLYEEAKYFQLQPMLLEMERWKQDRESGRFSRPCECLVVRVAPDLGERITLSGDKSLIEEVFPEIGDVMCNSVNAGWNHDSTHVIRFPLNGYCHLNSVQVLERLQQRGFEVVGSCGGGVDSSQFSEYVLRRELRRTPRGPSVIRIKQEPLD.

The disordered stretch occupies residues 1–25 (MSRPLITRSPASPLNNQGIPTPAQL). Ser9 and Ser12 each carry phosphoserine. Positions 9 to 25 (SPASPLNNQGIPTPAQL) are enriched in polar residues. Positions 30-100 (APVHIDVGGH…LRTSKLLIPD (71 aa)) constitute a BTB domain.

As to quaternary structure, forms homopentamers. Interacts with KCTD15, probably forming heteropentamers depending on its abundance in a cell-type dependent manner. Interacts with TFAP2A, TFAP2B and TFAP2C via the BTB domain. In terms of processing, sumoylated.

Its subcellular location is the nucleus. Its function is as follows. May repress the transcriptional activity of AP-2 family members, including TFAP2A, TFAP2B and TFAP2C to various extent. This chain is BTB/POZ domain-containing protein KCTD1 (KCTD1), found in Bos taurus (Bovine).